The primary structure comprises 267 residues: 3-methyl-2-oxobutanoate hydroxymethyltransferase (267 aa).

2 residues coordinate Mg(2+): Asp46 and Asp85. 3-methyl-2-oxobutanoate contacts are provided by residues 46–47 (DS), Asp85, and Lys115. A Mg(2+)-binding site is contributed by Glu117. The active-site Proton acceptor is Glu184.

It belongs to the PanB family. In terms of assembly, homodecamer; pentamer of dimers. Mg(2+) is required as a cofactor.

It localises to the cytoplasm. The catalysed reaction is 3-methyl-2-oxobutanoate + (6R)-5,10-methylene-5,6,7,8-tetrahydrofolate + H2O = 2-dehydropantoate + (6S)-5,6,7,8-tetrahydrofolate. It participates in cofactor biosynthesis; (R)-pantothenate biosynthesis; (R)-pantoate from 3-methyl-2-oxobutanoate: step 1/2. Functionally, catalyzes the reversible reaction in which hydroxymethyl group from 5,10-methylenetetrahydrofolate is transferred onto alpha-ketoisovalerate to form ketopantoate. The chain is 3-methyl-2-oxobutanoate hydroxymethyltransferase from Geotalea uraniireducens (strain Rf4) (Geobacter uraniireducens).